Here is a 167-residue protein sequence, read N- to C-terminus: Gametocyte-specific factor 1 (167 aa).

Ser8 is modified (phosphoserine). 2 consecutive CHHC U11-48K-type zinc fingers follow at residues 14–41 (LLQC…RKNH) and 48–75 (LATC…DDRS). Zn(2+) is bound by residues Cys17, His23, His33, Cys37, Cys51, His57, His67, and Cys71.

This sequence belongs to the UPF0224 (FAM112) family.

The protein localises to the cytoplasm. Its function is as follows. Required for spermatogenesis and is involved in the suppression of retrotransposon transcription in male germ cells. In Homo sapiens (Human), this protein is Gametocyte-specific factor 1 (GTSF1).